The chain runs to 480 residues: Protein nucleotidyltransferase YdiU (480 aa).

Positions 86, 88, 89, 109, 121, 122, 172, and 179 each coordinate ATP. The Proton acceptor role is filled by Asp-248. 2 residues coordinate Mg(2+): Asn-249 and Asp-258. An ATP-binding site is contributed by Asp-258.

The protein belongs to the SELO family. Requires Mg(2+) as cofactor. Mn(2+) is required as a cofactor.

The enzyme catalyses L-seryl-[protein] + ATP = 3-O-(5'-adenylyl)-L-seryl-[protein] + diphosphate. It catalyses the reaction L-threonyl-[protein] + ATP = 3-O-(5'-adenylyl)-L-threonyl-[protein] + diphosphate. It carries out the reaction L-tyrosyl-[protein] + ATP = O-(5'-adenylyl)-L-tyrosyl-[protein] + diphosphate. The catalysed reaction is L-histidyl-[protein] + UTP = N(tele)-(5'-uridylyl)-L-histidyl-[protein] + diphosphate. The enzyme catalyses L-seryl-[protein] + UTP = O-(5'-uridylyl)-L-seryl-[protein] + diphosphate. It catalyses the reaction L-tyrosyl-[protein] + UTP = O-(5'-uridylyl)-L-tyrosyl-[protein] + diphosphate. Nucleotidyltransferase involved in the post-translational modification of proteins. It can catalyze the addition of adenosine monophosphate (AMP) or uridine monophosphate (UMP) to a protein, resulting in modifications known as AMPylation and UMPylation. This is Protein nucleotidyltransferase YdiU from Salmonella heidelberg (strain SL476).